Here is a 67-residue protein sequence, read N- to C-terminus: MDDRLNELEIKLAFQEDLLETLNLTVARQQQQLDLLQEQFRALYQQVTSAPSTAAESNPQHEIPPHY.

Residues 48–60 (TSAPSTAAESNPQ) are compositionally biased toward polar residues. The tract at residues 48 to 67 (TSAPSTAAESNPQHEIPPHY) is disordered.

This sequence belongs to the SlyX family.

The polypeptide is Protein SlyX homolog (Cupriavidus pinatubonensis (strain JMP 134 / LMG 1197) (Cupriavidus necator (strain JMP 134))).